Here is an 89-residue protein sequence, read N- to C-terminus: Small ribosomal subunit protein uS14 (89 aa).

The protein belongs to the universal ribosomal protein uS14 family. In terms of assembly, part of the 30S ribosomal subunit. Contacts proteins S3 and S10.

Its function is as follows. Binds 16S rRNA, required for the assembly of 30S particles and may also be responsible for determining the conformation of the 16S rRNA at the A site. This chain is Small ribosomal subunit protein uS14, found in Leuconostoc citreum (strain KM20).